Reading from the N-terminus, the 160-residue chain is Protein TCP17 (160 aa).

Its subcellular location is the cytoplasm. This is Protein TCP17 from Trypanosoma cruzi.